Consider the following 39-residue polypeptide: Small basic protein 1 (39 aa).

A Pyrrolidone carboxylic acid modification is found at glutamine 1. Cystine bridges form between cysteine 6-cysteine 32, cysteine 10-cysteine 26, and cysteine 14-cysteine 31.

The protein resides in the secreted. This chain is Small basic protein 1, found in Anas platyrhynchos (Mallard).